Consider the following 349-residue polypeptide: Ribonucleoside-diphosphate reductase small chain (349 aa).

Fe cation contacts are provided by D99, E130, and H133. Y137 is an active-site residue. 3 residues coordinate Fe cation: E192, E226, and H229.

It belongs to the ribonucleoside diphosphate reductase small chain family. In terms of assembly, heterodimer of a large and a small subunit. Requires Fe cation as cofactor.

It carries out the reaction a 2'-deoxyribonucleoside 5'-diphosphate + [thioredoxin]-disulfide + H2O = a ribonucleoside 5'-diphosphate + [thioredoxin]-dithiol. In terms of biological role, provides the precursors necessary for DNA synthesis. Catalyzes the biosynthesis of deoxyribonucleotides from the corresponding ribonucleotides. The sequence is that of Ribonucleoside-diphosphate reductase small chain (RNR2) from Plasmodium falciparum (isolate Dd2).